A 266-amino-acid polypeptide reads, in one-letter code: Orotidine 5'-phosphate decarboxylase (266 aa).

Residues Asp37, 59-61, 91-100, Tyr217, and Arg235 each bind substrate; these read KTH and DRKFADIGNT. The active-site Proton donor is the Lys93.

This sequence belongs to the OMP decarboxylase family.

It carries out the reaction orotidine 5'-phosphate + H(+) = UMP + CO2. The protein operates within pyrimidine metabolism; UMP biosynthesis via de novo pathway; UMP from orotate: step 2/2. The polypeptide is Orotidine 5'-phosphate decarboxylase (URA3) (Cyberlindnera jadinii (Torula yeast)).